Reading from the N-terminus, the 365-residue chain is Alanine racemase (365 aa).

Lys35 (proton acceptor; specific for D-alanine) is an active-site residue. An N6-(pyridoxal phosphate)lysine modification is found at Lys35. Position 130 (Arg130) interacts with substrate. Tyr256 functions as the Proton acceptor; specific for L-alanine in the catalytic mechanism. Substrate is bound at residue Met304.

This sequence belongs to the alanine racemase family. Requires pyridoxal 5'-phosphate as cofactor.

The catalysed reaction is L-alanine = D-alanine. It participates in amino-acid biosynthesis; D-alanine biosynthesis; D-alanine from L-alanine: step 1/1. Catalyzes the interconversion of L-alanine and D-alanine. May also act on other amino acids. This is Alanine racemase (alr) from Polaromonas naphthalenivorans (strain CJ2).